We begin with the raw amino-acid sequence, 188 residues long: GTP-dependent dephospho-CoA kinase (188 aa).

Residues Asp43, Val44, Asp62, Glu121, and Asp144 each coordinate GTP.

It belongs to the GTP-dependent DPCK family.

The enzyme catalyses 3'-dephospho-CoA + GTP = GDP + CoA + H(+). The protein operates within cofactor biosynthesis; coenzyme A biosynthesis. Catalyzes the GTP-dependent phosphorylation of the 3'-hydroxyl group of dephosphocoenzyme A to form coenzyme A (CoA). This chain is GTP-dependent dephospho-CoA kinase, found in Methanococcoides burtonii (strain DSM 6242 / NBRC 107633 / OCM 468 / ACE-M).